The primary structure comprises 262 residues: 4-hydroxy-tetrahydrodipicolinate reductase (262 aa).

9 to 14 provides a ligand contact to NAD(+); the sequence is GCLGRM. R36 contacts NADP(+). NAD(+)-binding positions include 100 to 102 and 121 to 124; these read GTT and SANM. The active-site Proton donor/acceptor is H154. H155 contributes to the (S)-2,3,4,5-tetrahydrodipicolinate binding site. Catalysis depends on K158, which acts as the Proton donor. A (S)-2,3,4,5-tetrahydrodipicolinate-binding site is contributed by 164–165; sequence GT.

The protein belongs to the DapB family.

It localises to the cytoplasm. The enzyme catalyses (S)-2,3,4,5-tetrahydrodipicolinate + NAD(+) + H2O = (2S,4S)-4-hydroxy-2,3,4,5-tetrahydrodipicolinate + NADH + H(+). The catalysed reaction is (S)-2,3,4,5-tetrahydrodipicolinate + NADP(+) + H2O = (2S,4S)-4-hydroxy-2,3,4,5-tetrahydrodipicolinate + NADPH + H(+). It participates in amino-acid biosynthesis; L-lysine biosynthesis via DAP pathway; (S)-tetrahydrodipicolinate from L-aspartate: step 4/4. Functionally, catalyzes the conversion of 4-hydroxy-tetrahydrodipicolinate (HTPA) to tetrahydrodipicolinate. This Wolbachia pipientis subsp. Culex pipiens (strain wPip) protein is 4-hydroxy-tetrahydrodipicolinate reductase.